A 262-amino-acid chain; its full sequence is Small ribosomal subunit protein uS2 (262 aa).

This sequence belongs to the universal ribosomal protein uS2 family.

This Borreliella afzelii (strain PKo) (Borrelia afzelii) protein is Small ribosomal subunit protein uS2.